The following is a 568-amino-acid chain: Urocanate hydratase (568 aa).

NAD(+) is bound by residues 58–59, Q136, 182–184, E202, R207, 248–249, 269–273, 279–280, and Y328; these read GG, GMG, NA, QTSAH, and YL. C416 is an active-site residue. G498 serves as a coordination point for NAD(+).

This sequence belongs to the urocanase family. The cofactor is NAD(+).

The protein localises to the cytoplasm. It carries out the reaction 4-imidazolone-5-propanoate = trans-urocanate + H2O. The protein operates within amino-acid degradation; L-histidine degradation into L-glutamate; N-formimidoyl-L-glutamate from L-histidine: step 2/3. Functionally, catalyzes the conversion of urocanate to 4-imidazolone-5-propionate. This Photobacterium profundum (strain SS9) protein is Urocanate hydratase.